Consider the following 340-residue polypeptide: Heat-inducible transcription repressor HrcA (340 aa).

It belongs to the HrcA family.

Negative regulator of class I heat shock genes (grpE-dnaK-dnaJ and groELS operons). Prevents heat-shock induction of these operons. This is Heat-inducible transcription repressor HrcA from Chromobacterium violaceum (strain ATCC 12472 / DSM 30191 / JCM 1249 / CCUG 213 / NBRC 12614 / NCIMB 9131 / NCTC 9757 / MK).